A 516-amino-acid polypeptide reads, in one-letter code: NADH-quinone oxidoreductase subunit N (516 aa).

Helical transmembrane passes span 12–32 (LLPA…DLLV), 37–57 (VTIS…VLVG), 81–101 (LVAV…GPLL), 108–128 (VGEY…LGAA), 131–151 (LITL…LVGL), 163–183 (VTFF…AALL), 213–233 (VAVA…PFHA), 246–266 (VAAY…LAVV), 274–294 (ITGL…NLVA), 303–323 (LLAW…GALA), 341–361 (VAYT…VVAL), 386–406 (VGLA…AGLF), 419–439 (GAAG…AYYL), and 491–511 (VVLA…QLVL).

This sequence belongs to the complex I subunit 2 family. NDH-1 is composed of 14 different subunits. Subunits NuoA, H, J, K, L, M, N constitute the membrane sector of the complex.

It localises to the cell membrane. It catalyses the reaction a quinone + NADH + 5 H(+)(in) = a quinol + NAD(+) + 4 H(+)(out). In terms of biological role, NDH-1 shuttles electrons from NADH, via FMN and iron-sulfur (Fe-S) centers, to quinones in the respiratory chain. The immediate electron acceptor for the enzyme in this species is believed to be a menaquinone. Couples the redox reaction to proton translocation (for every two electrons transferred, four hydrogen ions are translocated across the cytoplasmic membrane), and thus conserves the redox energy in a proton gradient. The chain is NADH-quinone oxidoreductase subunit N from Salinispora tropica (strain ATCC BAA-916 / DSM 44818 / JCM 13857 / NBRC 105044 / CNB-440).